The chain runs to 452 residues: Bifunctional protein GlmU (452 aa).

Residues 1 to 224 are pyrophosphorylase; it reads MNIVILAAGM…VWETHGVNSK (224 aa). UDP-N-acetyl-alpha-D-glucosamine-binding positions include 6–9, lysine 20, glutamine 71, 76–77, 98–100, glycine 135, glutamate 149, asparagine 164, and asparagine 222; these read LAAG, GT, and YGD. Aspartate 100 serves as a coordination point for Mg(2+). Asparagine 222 contacts Mg(2+). The interval 225-245 is linker; it reads VQLAELERVHQNNIARALLEH. The interval 246–452 is N-acetyltransferase; that stretch reads GVTLADPARI…GWQRPVKIKK (207 aa). UDP-N-acetyl-alpha-D-glucosamine-binding residues include arginine 328 and lysine 346. Histidine 358 serves as the catalytic Proton acceptor. Tyrosine 361 and asparagine 372 together coordinate UDP-N-acetyl-alpha-D-glucosamine. Residues alanine 375, 381–382, serine 400, alanine 418, and arginine 435 each bind acetyl-CoA; that span reads NY.

In the N-terminal section; belongs to the N-acetylglucosamine-1-phosphate uridyltransferase family. It in the C-terminal section; belongs to the transferase hexapeptide repeat family. As to quaternary structure, homotrimer. Requires Mg(2+) as cofactor.

The protein resides in the cytoplasm. It catalyses the reaction alpha-D-glucosamine 1-phosphate + acetyl-CoA = N-acetyl-alpha-D-glucosamine 1-phosphate + CoA + H(+). It carries out the reaction N-acetyl-alpha-D-glucosamine 1-phosphate + UTP + H(+) = UDP-N-acetyl-alpha-D-glucosamine + diphosphate. It functions in the pathway nucleotide-sugar biosynthesis; UDP-N-acetyl-alpha-D-glucosamine biosynthesis; N-acetyl-alpha-D-glucosamine 1-phosphate from alpha-D-glucosamine 6-phosphate (route II): step 2/2. It participates in nucleotide-sugar biosynthesis; UDP-N-acetyl-alpha-D-glucosamine biosynthesis; UDP-N-acetyl-alpha-D-glucosamine from N-acetyl-alpha-D-glucosamine 1-phosphate: step 1/1. Its pathway is bacterial outer membrane biogenesis; LPS lipid A biosynthesis. Its function is as follows. Catalyzes the last two sequential reactions in the de novo biosynthetic pathway for UDP-N-acetylglucosamine (UDP-GlcNAc). The C-terminal domain catalyzes the transfer of acetyl group from acetyl coenzyme A to glucosamine-1-phosphate (GlcN-1-P) to produce N-acetylglucosamine-1-phosphate (GlcNAc-1-P), which is converted into UDP-GlcNAc by the transfer of uridine 5-monophosphate (from uridine 5-triphosphate), a reaction catalyzed by the N-terminal domain. The polypeptide is Bifunctional protein GlmU (Herminiimonas arsenicoxydans).